The chain runs to 491 residues: Delayed-rectifier potassium channel regulatory subunit KCNS3 (491 aa).

The Cytoplasmic portion of the chain corresponds to 1–182 (MVFGEFFHRP…IRMENPAYCL (182 aa)). The helical transmembrane segment at 183–204 (SAKLIAISSLSVVLASIVAMCV) threads the bilayer. The Extracellular portion of the chain corresponds to 205–220 (HSMSEFQNEDGEVDDP). The helical transmembrane segment at 221–243 (VLEGVEIACIAWFTGELAVRLVA) threads the bilayer. The Cytoplasmic portion of the chain corresponds to 244 to 254 (APCQKKFWKNP). A helical transmembrane segment spans residues 255-275 (LNIIDFVSIIPFYATLAVDTK). Residues 276 to 285 (EEESEDIENM) are Extracellular-facing. The chain crosses the membrane as a helical; Voltage-sensor span at residues 286–306 (GKVVQILRLMRIFRILKLARH). The Cytoplasmic portion of the chain corresponds to 307–321 (SVGLRSLGATLRHSY). The chain crosses the membrane as a helical span at residues 322-343 (HEVGLLLLFLSVGISIFSVLIY). Residues 344 to 357 (SVEKDDHTSSLTSI) lie on the Extracellular side of the membrane. Residues 358–369 (PICWWWATISMT) constitute an intramembrane region (helical). Residues 370–375 (TVGYGD) carry the Selectivity filter motif. Residues 370–377 (TVGYGDTH) lie within the membrane without spanning it. Residues 378–384 (PVTLAGK) lie on the Extracellular side of the membrane. A helical membrane pass occupies residues 385–413 (LIASTCIICGILVVALPITIIFNKFSKYY). Over 414–491 (QKQKDIDVDQ…TASLENCTAK (78 aa)) the chain is Cytoplasmic.

It belongs to the potassium channel family. S (TC 1.A.1.2) subfamily. Kv9.3/KCNS3 sub-subfamily. In terms of assembly, heterotetramer with KCNB1. Does not form homomultimers.

It localises to the cell membrane. In terms of biological role, potassium channel regulatory subunit that modulates the delayed rectifier potassium channel activity of KCNB1 by namely slowing down the deactivation and inactivation time constants. While it does not form functional channel on its own, it can form functional heterotetrameric channels with KCNB1. The sequence is that of Delayed-rectifier potassium channel regulatory subunit KCNS3 from Oryctolagus cuniculus (Rabbit).